We begin with the raw amino-acid sequence, 754 residues long: DNA topoisomerase 4 subunit A (754 aa).

The Topo IIA-type catalytic domain maps to 38–501; the sequence is LPHIGDGLKP…EARALSETEL (464 aa). The O-(5'-phospho-DNA)-tyrosine intermediate role is filled by tyrosine 127.

It belongs to the type II topoisomerase GyrA/ParC subunit family. ParC type 1 subfamily. In terms of assembly, heterotetramer composed of ParC and ParE.

The protein localises to the cell membrane. It catalyses the reaction ATP-dependent breakage, passage and rejoining of double-stranded DNA.. Its function is as follows. Topoisomerase IV is essential for chromosome segregation. It relaxes supercoiled DNA. Performs the decatenation events required during the replication of a circular DNA molecule. This is DNA topoisomerase 4 subunit A from Pseudomonas aeruginosa (strain ATCC 15692 / DSM 22644 / CIP 104116 / JCM 14847 / LMG 12228 / 1C / PRS 101 / PAO1).